The sequence spans 396 residues: Initiation-specific alpha-1,6-mannosyltransferase (396 aa).

Residues 1–7 (MLRLRLR) are Cytoplasmic-facing. A helical; Signal-anchor for type II membrane protein transmembrane segment spans residues 8-28 (SIVIGAAIAGSILLLFNHGSI). The Lumenal segment spans residues 29–396 (EGMEDLTEIS…HFFAGSWKDD (368 aa)). The DXD motif motif lies at 229-231 (DID). Asn-345 is a glycosylation site (N-linked (GlcNAc...) asparagine).

It belongs to the glycosyltransferase 32 family. Mn(2+) serves as cofactor.

It is found in the endoplasmic reticulum membrane. It localises to the golgi apparatus membrane. The catalysed reaction is Transfers an alpha-D-mannosyl residue from GDP-mannose into lipid-linked oligosaccharide, forming an alpha-(1-&gt;6)-D-mannosyl-D-mannose linkage.. Its function is as follows. Mannosyltransferase involved in outer chain elongation of asparagine-linked oligosaccharides of the type Man(9)GlcNAc(2). May otherwise add the first alpha-1,6-mannose to the Man(8)GlcNAc(2) core oligosaccharide from the ER. Represents the first enzymatic event required for synthesis of outer chain mannose linkages on yeast secretory proteins. The chain is Initiation-specific alpha-1,6-mannosyltransferase from Schizosaccharomyces pombe (strain 972 / ATCC 24843) (Fission yeast).